Consider the following 95-residue polypeptide: Acylphosphatase (95 aa).

One can recognise an Acylphosphatase-like domain in the interval 7-95 (CTMAWVYGSV…RSWDKFAILY (89 aa)). Residues arginine 22 and asparagine 40 contribute to the active site.

This sequence belongs to the acylphosphatase family.

The catalysed reaction is an acyl phosphate + H2O = a carboxylate + phosphate + H(+). This is Acylphosphatase (acyP) from Klebsiella pneumoniae subsp. pneumoniae (strain ATCC 700721 / MGH 78578).